Reading from the N-terminus, the 130-residue chain is Ribonuclease P protein component (130 aa).

It belongs to the RnpA family. Consists of a catalytic RNA component (M1 or rnpB) and a protein subunit.

The enzyme catalyses Endonucleolytic cleavage of RNA, removing 5'-extranucleotides from tRNA precursor.. RNaseP catalyzes the removal of the 5'-leader sequence from pre-tRNA to produce the mature 5'-terminus. It can also cleave other RNA substrates such as 4.5S RNA. The protein component plays an auxiliary but essential role in vivo by binding to the 5'-leader sequence and broadening the substrate specificity of the ribozyme. The chain is Ribonuclease P protein component from Psychrobacter sp. (strain PRwf-1).